The following is a 761-amino-acid chain: Protein transport protein SEC23 C (761 aa).

Zn(2+) contacts are provided by C60, C63, C82, and C85. The zinc finger-like stretch occupies residues 60-85 (CRTCRSVLNPYSVVDFSACNWGCPFC).

The protein belongs to the SEC23/SEC24 family. SEC24 subfamily. In terms of assembly, component of the coat protein complex II (COPII), composed of at least five proteins: the Sec23/24 complex, the Sec13/31 complex and Sar1.

The protein localises to the cytoplasmic vesicle. It is found in the COPII-coated vesicle membrane. Its subcellular location is the endoplasmic reticulum membrane. The protein resides in the membrane. Functionally, component of the coat protein complex II (COPII) which promotes the formation of transport vesicles from the endoplasmic reticulum (ER). The coat has two main functions, the physical deformation of the endoplasmic reticulum membrane into vesicles and the selection of cargo molecules. This chain is Protein transport protein SEC23 C, found in Arabidopsis thaliana (Mouse-ear cress).